We begin with the raw amino-acid sequence, 192 residues long: Adenylate kinase (192 aa).

12–17 lines the ATP pocket; it reads GSGKTT. The segment at 34 to 63 is NMP; that stretch reads STGDLLRAQVASGSELGKTIDSFISKGNLV. AMP-binding positions include Thr-35, Arg-40, 61 to 63, 88 to 91, and Gln-95; these read NLV and GYPR. Positions 130 to 136 are LID; it reads GRNRGAD. Position 131 (Arg-131) interacts with ATP. Residues Arg-133 and Arg-145 each coordinate AMP. Arg-173 is an ATP binding site.

The protein belongs to the adenylate kinase family. As to quaternary structure, monomer.

It is found in the cytoplasm. It catalyses the reaction AMP + ATP = 2 ADP. It functions in the pathway purine metabolism; AMP biosynthesis via salvage pathway; AMP from ADP: step 1/1. Catalyzes the reversible transfer of the terminal phosphate group between ATP and AMP. Plays an important role in cellular energy homeostasis and in adenine nucleotide metabolism. The protein is Adenylate kinase of Campylobacter jejuni subsp. doylei (strain ATCC BAA-1458 / RM4099 / 269.97).